We begin with the raw amino-acid sequence, 53 residues long: Sec-independent protein translocase protein TatA (53 aa).

The chain crosses the membrane as a helical span at residues 1–21 (MGMSFSHLLIVLLIIFVLFGA).

It belongs to the TatA/E family. The Tat system comprises two distinct complexes: a TatABC complex, containing multiple copies of TatA, TatB and TatC subunits, and a separate TatA complex, containing only TatA subunits. Substrates initially bind to the TatABC complex, which probably triggers association of the separate TatA complex to form the active translocon.

It is found in the cell inner membrane. In terms of biological role, part of the twin-arginine translocation (Tat) system that transports large folded proteins containing a characteristic twin-arginine motif in their signal peptide across membranes. TatA could form the protein-conducting channel of the Tat system. This Rickettsia africae (strain ESF-5) protein is Sec-independent protein translocase protein TatA.